The following is a 218-amino-acid chain: Tegument protein UL51 homolog (218 aa).

A lipid anchor (S-palmitoyl cysteine; by host) is attached at cysteine 11. The interval 199–218 (APPPVVRQPEHSGPTELALT) is disordered.

The protein belongs to the herpesviridae UL51 family. Homodimer. Interacts with BBRF2; the BBRF2-BSRF1 complexes oligomerize which might play a role in tethering the viral nucleocapsids to the host Golgi membrane during secondary envelopment. Interacts with BGLF3.5. Interacts with BALF1. Interacts with glycoprotein gB. Interacts with glycoprotein heterodimer gH/gL. Phosphorylated. Post-translationally, palmitoylation is necessary for Golgi localization.

The protein localises to the host cytoplasm. It localises to the virion. The protein resides in the host Golgi apparatus. Functionally, plays several roles during the time course of infection, including egress of virus particles from the perinuclear space and secondary envelopment of cytoplasmic capsids that bud into specific trans-Golgi network (TGN)-derived membranes. In Homo sapiens (Human), this protein is Tegument protein UL51 homolog.